We begin with the raw amino-acid sequence, 179 residues long: Large ribosomal subunit protein uL5 (179 aa).

The protein belongs to the universal ribosomal protein uL5 family. As to quaternary structure, part of the 50S ribosomal subunit; part of the 5S rRNA/L5/L18/L25 subcomplex. Contacts the 5S rRNA and the P site tRNA. Forms a bridge to the 30S subunit in the 70S ribosome.

In terms of biological role, this is one of the proteins that bind and probably mediate the attachment of the 5S RNA into the large ribosomal subunit, where it forms part of the central protuberance. In the 70S ribosome it contacts protein S13 of the 30S subunit (bridge B1b), connecting the 2 subunits; this bridge is implicated in subunit movement. Contacts the P site tRNA; the 5S rRNA and some of its associated proteins might help stabilize positioning of ribosome-bound tRNAs. The polypeptide is Large ribosomal subunit protein uL5 (Shewanella amazonensis (strain ATCC BAA-1098 / SB2B)).